The sequence spans 264 residues: Thymidylate synthase (264 aa).

Arg-21 serves as a coordination point for dUMP. His-51 contacts (6R)-5,10-methylene-5,6,7,8-tetrahydrofolate. A dUMP-binding site is contributed by 126 to 127 (RR). Cys-146 functions as the Nucleophile in the catalytic mechanism. DUMP-binding positions include 166–169 (RSAD), Asn-177, and 207–209 (HLY). Asp-169 lines the (6R)-5,10-methylene-5,6,7,8-tetrahydrofolate pocket. Ala-263 serves as a coordination point for (6R)-5,10-methylene-5,6,7,8-tetrahydrofolate.

This sequence belongs to the thymidylate synthase family. Bacterial-type ThyA subfamily. As to quaternary structure, homodimer.

It is found in the cytoplasm. It carries out the reaction dUMP + (6R)-5,10-methylene-5,6,7,8-tetrahydrofolate = 7,8-dihydrofolate + dTMP. It functions in the pathway pyrimidine metabolism; dTTP biosynthesis. Functionally, catalyzes the reductive methylation of 2'-deoxyuridine-5'-monophosphate (dUMP) to 2'-deoxythymidine-5'-monophosphate (dTMP) while utilizing 5,10-methylenetetrahydrofolate (mTHF) as the methyl donor and reductant in the reaction, yielding dihydrofolate (DHF) as a by-product. This enzymatic reaction provides an intracellular de novo source of dTMP, an essential precursor for DNA biosynthesis. This Legionella pneumophila (strain Paris) protein is Thymidylate synthase.